The sequence spans 90 residues: Molybdopterin synthase sulfur carrier subunit (90 aa).

Gly90 bears the 1-thioglycine; alternate mark. Position 90 is a glycyl adenylate; alternate (Gly90).

This sequence belongs to the MoaD family. MOCS2A subfamily. As to quaternary structure, heterotetramer; composed of 2 small (Mocs2A) and 2 large (Mocs2B) subunits. Post-translationally, C-terminal thiocarboxylation occurs in 2 steps, it is first acyl-adenylated (-COAMP) via the hesA/moeB/thiF part of MOCS3, then thiocarboxylated (-COSH) via the rhodanese domain of MOCS3.

It is found in the cytoplasm. The protein operates within cofactor biosynthesis; molybdopterin biosynthesis. Its function is as follows. Acts as a sulfur carrier required for molybdopterin biosynthesis. Component of the molybdopterin synthase complex that catalyzes the conversion of precursor Z into molybdopterin by mediating the incorporation of 2 sulfur atoms into precursor Z to generate a dithiolene group. In the complex, serves as sulfur donor by being thiocarboxylated (-COSH) at its C-terminus by MOCS3. After interaction with Mocs2B, the sulfur is then transferred to precursor Z to form molybdopterin. In Drosophila sechellia (Fruit fly), this protein is Molybdopterin synthase sulfur carrier subunit.